Reading from the N-terminus, the 80-residue chain is Protein FAM229B (80 aa).

Residues 1–44 form a disordered region; it reads MPFQFGTQPRRFPVEGGDSSIELEPGLSSSAACNGKEMSPTRQL.

It belongs to the FAM229 family.

This is Protein FAM229B (FAM229B) from Homo sapiens (Human).